The following is a 100-amino-acid chain: Urease subunit gamma (100 aa).

The protein belongs to the urease gamma subunit family. As to quaternary structure, heterotrimer of UreA (gamma), UreB (beta) and UreC (alpha) subunits. Three heterotrimers associate to form the active enzyme.

Its subcellular location is the cytoplasm. The enzyme catalyses urea + 2 H2O + H(+) = hydrogencarbonate + 2 NH4(+). It participates in nitrogen metabolism; urea degradation; CO(2) and NH(3) from urea (urease route): step 1/1. The chain is Urease subunit gamma from Sinorhizobium fredii (strain NBRC 101917 / NGR234).